Consider the following 606-residue polypeptide: Sporulation kinase A (606 aa).

One can recognise a PAS 1 domain in the interval 3 to 73 (QDTQHVKPLQ…SYFYNEHHLM (71 aa)). Residues 77–116 (FRFIKKDHTIVWVEAAVEIVTTRAERTEREIILKMKVLEE) enclose the PAC 1 domain. The PAS 2 domain maps to 140-214 (YITDDYERLV…IRMQKGMEVG (75 aa)). The 38-residue stretch at 218–255 (QTWKRLDGTPVHLEVKASPTVYKNQQAELLLLIDISSR) folds into the PAC 2 domain. In terms of domain architecture, PAS 3 spans 265 to 335 (SRERYQLLIQ…ERIQNIAEQK (71 aa)). The Histidine kinase domain occupies 402-606 (GIAHEIRNPL…TAFKISFPKK (205 aa)). His405 is modified (phosphohistidine; by autocatalysis).

It carries out the reaction ATP + protein L-histidine = ADP + protein N-phospho-L-histidine.. Functionally, phosphorylates the sporulation-regulatory proteins spo0A and spo0F. It also autophosphorylates in the presence of ATP. The chain is Sporulation kinase A (kinA) from Bacillus subtilis (strain 168).